Here is a 406-residue protein sequence, read N- to C-terminus: Phosphopentomutase (406 aa).

6 residues coordinate Mn(2+): aspartate 10, aspartate 305, histidine 310, aspartate 346, histidine 347, and histidine 358.

The protein belongs to the phosphopentomutase family. Mn(2+) serves as cofactor.

Its subcellular location is the cytoplasm. It carries out the reaction 2-deoxy-alpha-D-ribose 1-phosphate = 2-deoxy-D-ribose 5-phosphate. The catalysed reaction is alpha-D-ribose 1-phosphate = D-ribose 5-phosphate. The protein operates within carbohydrate degradation; 2-deoxy-D-ribose 1-phosphate degradation; D-glyceraldehyde 3-phosphate and acetaldehyde from 2-deoxy-alpha-D-ribose 1-phosphate: step 1/2. Its function is as follows. Isomerase that catalyzes the conversion of deoxy-ribose 1-phosphate (dRib-1-P) and ribose 1-phosphate (Rib-1-P) to deoxy-ribose 5-phosphate (dRib-5-P) and ribose 5-phosphate (Rib-5-P), respectively. This Vibrio parahaemolyticus serotype O3:K6 (strain RIMD 2210633) protein is Phosphopentomutase.